A 366-amino-acid chain; its full sequence is MMSPDLDLNFSSNCNLYDHRPVARVLIPLVYSIICPVGLLGNALALHVVISSTTKINSITLYSANLAVSDILFCLSLPLRAVYYGLGFHWPMGEVLCKAIALLFYLNCYAGVNFMTCLAVDRFVALVFPARLAKLRKAKNVRFVCLAIWLLVLAQTLPLLTIGLTKTEPDSSITCMEYPNFEGVFKGLPYMLIVAVVLGFGIPVMTIIACYSILTHKLHQAAKSNQLTERSGKTKKARGVIAGVVFVFVVCFSPYHIDILQYMIRKLLYETDCKELQSFQISLHITVCLMNLNSCLDPFVYFFACKGYKQKVMRMMKWQVGTHFSSVKNSAESSGTGDVLGTRRNNRIIMNNVGEDQQICYQPSAT.

Residues 1–24 are Extracellular-facing; that stretch reads MMSPDLDLNFSSNCNLYDHRPVAR. Asparagine 9 carries N-linked (GlcNAc...) asparagine glycosylation. A helical membrane pass occupies residues 25–50; the sequence is VLIPLVYSIICPVGLLGNALALHVVI. Residues 51–70 lie on the Cytoplasmic side of the membrane; it reads SSTTKINSITLYSANLAVSD. Residues 71 to 88 traverse the membrane as a helical segment; sequence ILFCLSLPLRAVYYGLGF. The Extracellular segment spans residues 89–98; sequence HWPMGEVLCK. A disulfide bridge links cysteine 97 with cysteine 175. A helical transmembrane segment spans residues 99–120; sequence AIALLFYLNCYAGVNFMTCLAV. Residues 121–142 are Cytoplasmic-facing; that stretch reads DRFVALVFPARLAKLRKAKNVR. Residues 143 to 161 form a helical membrane-spanning segment; it reads FVCLAIWLLVLAQTLPLLT. Topologically, residues 162–187 are extracellular; it reads IGLTKTEPDSSITCMEYPNFEGVFKG. The chain crosses the membrane as a helical span at residues 188 to 210; the sequence is LPYMLIVAVVLGFGIPVMTIIAC. The Cytoplasmic portion of the chain corresponds to 211-236; that stretch reads YSILTHKLHQAAKSNQLTERSGKTKK. The helical transmembrane segment at 237-260 threads the bilayer; sequence ARGVIAGVVFVFVVCFSPYHIDIL. Residues 261 to 280 lie on the Extracellular side of the membrane; the sequence is QYMIRKLLYETDCKELQSFQ. The helical transmembrane segment at 281 to 305 threads the bilayer; that stretch reads ISLHITVCLMNLNSCLDPFVYFFAC. Residues 306-366 lie on the Cytoplasmic side of the membrane; sequence KGYKQKVMRM…QQICYQPSAT (61 aa).

This sequence belongs to the G-protein coupled receptor 1 family.

It is found in the cell membrane. Probable receptor for oxysterols that plays a central role during humoral immunity. Promotes activated B-cell localization in the outer follicle and interfollicular regions. The protein is G-protein coupled receptor 183-B (gpr183b) of Danio rerio (Zebrafish).